Reading from the N-terminus, the 216-residue chain is 2',3'-cyclic-nucleotide 3'-phosphodiesterase (216 aa).

H39 (proton donor/acceptor) is an active-site residue. T41 provides a ligand contact to substrate. The Proton donor/acceptor role is filled by H137. Positions 139 and 142 each coordinate substrate.

Belongs to the 2H phosphoesterase superfamily. CPD1 family.

Its subcellular location is the golgi apparatus. It catalyses the reaction a nucleoside 2',3'-cyclic phosphate + H2O = a nucleoside 2'-phosphate + H(+). In terms of biological role, involved in the metabolism of ADP-ribose 1',2'-cyclic phosphate which is produced as a consequence of tRNA splicing. The sequence is that of 2',3'-cyclic-nucleotide 3'-phosphodiesterase (CPD1) from Eremothecium gossypii (strain ATCC 10895 / CBS 109.51 / FGSC 9923 / NRRL Y-1056) (Yeast).